Consider the following 57-residue polypeptide: Large ribosomal subunit protein bL32 (57 aa).

A compositionally biased stretch (basic residues) spans 1 to 19 (MATPKRRMSRANTRSRRSQ). Residues 1–21 (MATPKRRMSRANTRSRRSQWK) form a disordered region.

Belongs to the bacterial ribosomal protein bL32 family.

In Mycobacterium ulcerans (strain Agy99), this protein is Large ribosomal subunit protein bL32.